Consider the following 116-residue polypeptide: U30-theraphotoxin-Cg1a (116 aa).

The signal sequence occupies residues 1–17 (MKLCVLTIASLLVTVTS). Residues 18–53 (LETQKEIAEGSELTREETPSLVEHKEDEAAAASEKR) constitute a propeptide that is removed on maturation. The tract at residues 24 to 46 (IAEGSELTREETPSLVEHKEDEA) is disordered. 4 cysteine pairs are disulfide-bonded: C55–C69, C62–C75, C66–C112, and C68–C88.

It belongs to the neurotoxin 03 (Tx2) family. 02 subfamily. HNTX-XV sub-subfamily. As to expression, expressed by the venom gland.

Its subcellular location is the secreted. Probable ion channel inhibitor. The protein is U30-theraphotoxin-Cg1a of Chilobrachys guangxiensis (Chinese earth tiger tarantula).